The following is a 366-amino-acid chain: Methyltransferase phm5 (366 aa).

Residues 204-205 (GG), aspartate 230, 255-256 (SM), arginine 273, and arginine 274 each bind S-adenosyl-L-methionine.

Belongs to the class I-like SAM-binding methyltransferase superfamily. Cation-independent O-methyltransferase family.

Its pathway is secondary metabolite biosynthesis. Its function is as follows. Methyltransferase; part of the gene cluster that mediates the biosynthesis of the trans-fused decalin-containing tetramic acid phomasetin, the stereochemical opposite of the HIV-1 integrase inhibitor equisetin. The PKS module of phm1 together with the enoylreductase phm4 catalyze the formation of the polyketide unit which is then conjugated to L-serine by the condensation domain of the phm1 NRPS module. Activity of the Dieckmann cyclase domain (RED) of phm1 results in release of the Dieckmann product intermediate. The Diels-Alderase phm7 then uses the Dieckmann product of phm1 as substrate and catalyzes the Diels-Alder cycloaddition to form the decalin ring of N-desmethylphomasetin. N-desmethylphomasetin is further methylated to phomasetin by the methyltransferase phm5. This chain is Methyltransferase phm5, found in Pyrenochaetopsis sp.